A 376-amino-acid chain; its full sequence is Flagellin B (376 aa).

Residues Ser103 to Thr130 adopt a coiled-coil conformation.

The protein belongs to the bacterial flagellin family. Heteromer of multiple flagellin subunits including FlaA, FlaB, FlaC, FlaD and possibly FlaE.

The protein resides in the secreted. The protein localises to the bacterial flagellum. Functionally, flagellin is the subunit protein which polymerizes to form the filaments of bacterial flagella. FlaB is not essential for flagellar synthesis and motility. The polypeptide is Flagellin B (flaB) (Vibrio anguillarum (Listonella anguillarum)).